Here is a 260-residue protein sequence, read N- to C-terminus: Thrombin-like enzyme gloshedobin (260 aa).

An N-terminal signal peptide occupies residues 1-18; it reads MVLIRVQANLLILQLSYA. Residues 19-24 constitute a propeptide that is removed on maturation; that stretch reads QKSSEL. The Peptidase S1 domain maps to 25–252; that stretch reads IIGGDECNIN…TEWIQSIIAG (228 aa). Intrachain disulfides connect Cys31/Cys165, Cys52/Cys68, Cys100/Cys258, Cys144/Cys212, Cys176/Cys191, and Cys202/Cys227. Active-site charge relay system residues include His67 and Asp112. Residues Asn123 and Asn124 are each glycosylated (N-linked (GlcNAc...) asparagine). Ser206 acts as the Charge relay system in catalysis.

Belongs to the peptidase S1 family. Snake venom subfamily. Monomer. In terms of tissue distribution, expressed by the venom gland.

It localises to the secreted. Its activity is regulated as follows. Completely inhibited by PMSF, and N-tosyl-Lphenylalanine chloromethyl ketone (TPCK) and poorly inhibited by benzamidine and derivates. Not inhibited by EDTA, heparin and hirudin. Functionally, thrombin-like snake venom serine protease. The recombinant form clots fibrinogen by cleaving fibrinogen Aalpha chain (FGA), and slowly Bbeta chain (FGB). Has amidolytic activities. The polypeptide is Thrombin-like enzyme gloshedobin (Gloydius shedaoensis (Shedao island pit viper)).